Consider the following 213-residue polypeptide: Na(+)-translocating NADH-quinone reductase subunit D (213 aa).

7 helical membrane-spanning segments follow: residues isoleucine 21 to alanine 41, isoleucine 42 to leucine 62, isoleucine 77 to isoleucine 97, leucine 101 to leucine 121, phenylalanine 131 to isoleucine 151, glutamate 153 to serine 173, and leucine 183 to valine 203.

This sequence belongs to the NqrDE/RnfAE family. Composed of six subunits; NqrA, NqrB, NqrC, NqrD, NqrE and NqrF.

It localises to the cell inner membrane. It carries out the reaction a ubiquinone + n Na(+)(in) + NADH + H(+) = a ubiquinol + n Na(+)(out) + NAD(+). NQR complex catalyzes the reduction of ubiquinone-1 to ubiquinol by two successive reactions, coupled with the transport of Na(+) ions from the cytoplasm to the periplasm. NqrA to NqrE are probably involved in the second step, the conversion of ubisemiquinone to ubiquinol. In Chlamydia pneumoniae (Chlamydophila pneumoniae), this protein is Na(+)-translocating NADH-quinone reductase subunit D.